The following is a 309-amino-acid chain: MPIRVPDELPAVNFLRQENVFVMTTSRASVQEIRPLKVLILNLMPKKIETENQFLRLLSNSPLQVDIRLLRIDSRESRNTPAEHLNNFYCNFEDICDENYDGLIVTGAPLGLVEFNDVAYWPQIQQVLEWAKEHVTSTLFVCWAVQAALNILYGIPKQTRQEKISGVYEHHITQPHALLTKGFDDTFLAPHSRYADFPAALIRDYTDLDILAESEEGDAYLFASKDKRIAFVTGHPEYDALTLAGEYFRDVEAGLAPRVPYNYFPNNDPTKTPRATWRSHGNLLFTNWLNYYVYQITPYDLRHMNPTLE.

Residue Cys-142 is the Acyl-thioester intermediate of the active site. Substrate is bound by residues Lys-163 and Ser-192. His-235 functions as the Proton acceptor in the catalytic mechanism. Glu-237 is a catalytic residue. Residue Arg-249 participates in substrate binding.

The protein belongs to the MetA family.

Its subcellular location is the cytoplasm. The catalysed reaction is L-homoserine + succinyl-CoA = O-succinyl-L-homoserine + CoA. It functions in the pathway amino-acid biosynthesis; L-methionine biosynthesis via de novo pathway; O-succinyl-L-homoserine from L-homoserine: step 1/1. Its function is as follows. Transfers a succinyl group from succinyl-CoA to L-homoserine, forming succinyl-L-homoserine. This chain is Homoserine O-succinyltransferase, found in Cronobacter sakazakii (strain ATCC BAA-894) (Enterobacter sakazakii).